Here is a 462-residue protein sequence, read N- to C-terminus: Argininosuccinate lyase (462 aa).

It belongs to the lyase 1 family. Argininosuccinate lyase subfamily.

Its subcellular location is the cytoplasm. The catalysed reaction is 2-(N(omega)-L-arginino)succinate = fumarate + L-arginine. Its pathway is amino-acid biosynthesis; L-arginine biosynthesis; L-arginine from L-ornithine and carbamoyl phosphate: step 3/3. This is Argininosuccinate lyase from Caldicellulosiruptor bescii (strain ATCC BAA-1888 / DSM 6725 / KCTC 15123 / Z-1320) (Anaerocellum thermophilum).